The sequence spans 160 residues: NAD(P)H-quinone oxidoreductase subunit I, chloroplastic (160 aa).

2 consecutive 4Fe-4S ferredoxin-type domains span residues 55–84 (GRIH…VDWK) and 95–124 (LNYS…MTEE). Positions 64, 67, 70, 74, 104, 107, 110, and 114 each coordinate [4Fe-4S] cluster.

Belongs to the complex I 23 kDa subunit family. As to quaternary structure, NDH is composed of at least 16 different subunits, 5 of which are encoded in the nucleus. [4Fe-4S] cluster is required as a cofactor.

The protein localises to the plastid. Its subcellular location is the chloroplast thylakoid membrane. It catalyses the reaction a plastoquinone + NADH + (n+1) H(+)(in) = a plastoquinol + NAD(+) + n H(+)(out). The enzyme catalyses a plastoquinone + NADPH + (n+1) H(+)(in) = a plastoquinol + NADP(+) + n H(+)(out). Its function is as follows. NDH shuttles electrons from NAD(P)H:plastoquinone, via FMN and iron-sulfur (Fe-S) centers, to quinones in the photosynthetic chain and possibly in a chloroplast respiratory chain. The immediate electron acceptor for the enzyme in this species is believed to be plastoquinone. Couples the redox reaction to proton translocation, and thus conserves the redox energy in a proton gradient. This is NAD(P)H-quinone oxidoreductase subunit I, chloroplastic from Cucumis sativus (Cucumber).